Consider the following 152-residue polypeptide: Transcription elongation factor Spt5 (152 aa).

The region spanning 99-128 is the KOW domain; that stretch reads PGDVVEVISGPFRGTQAQVIRVEEAKGEVV.

It belongs to the archaeal Spt5 family. Heterodimer composed of Spt4 and Spt5. Interacts with RNA polymerase (RNAP).

Functionally, stimulates transcription elongation. This Saccharolobus solfataricus (strain ATCC 35092 / DSM 1617 / JCM 11322 / P2) (Sulfolobus solfataricus) protein is Transcription elongation factor Spt5.